A 435-amino-acid chain; its full sequence is MAIIEPQMENQNTIPIYAREETPYDTLSKVLTFSNIDQEEYWRRIAPLLGKLLQQGSNYTIHQQYQHLCFYALHVIPLLGPFPVEGRSSYNCPLGGVGAIEPSQNFQKSGTSLRYTFEPTSTGAISGRSDPFNRFMIDDALSRFRQAGVRFNPHLYEALKKEVLLTDEEAEAICQHHDVPKMEFRAQACIAVDLDGGNMSVKLYVYPMLKATLLNIPNWELCLNAIRHVDGEGQFTSATAALETYLRTQCPTTVREQTSATTQVSYIACDLVDLQRARFKVYLFDLHVSFERIITHWTMGGRLNDEVTMSGLGILRELWDELKIPEGRRKPIERPPKPGDGPTMPLFFNYEMKAGDRLPKVKAYLPLVGMPEMPIARKLAAFFQRYGFPVEGRQYVDTLAGYFPDEDLEIVTHHQAFLSFSYSAKTGPYMTIYYH.

Substrate is bound at residue Glu101. The dimethylallyl diphosphate site is built by Arg114, Lys202, and Tyr204. Tyr206 is a binding site for substrate. The dimethylallyl diphosphate site is built by Lys280, Tyr282, Tyr364, Tyr429, and Tyr433.

This sequence belongs to the tryptophan dimethylallyltransferase family.

It participates in secondary metabolite biosynthesis. Prenyltransferase; part of the gene cluster that mediates the biosynthesis of the benzazepine alkaloid nanangelenin A which contains an unprecedented 3,4-dihydro-1-benzazepine-2,5-dione-N-prenyl-N-acetoxy-anthranilamide scaffold. The first step of nanangelenin biosynthesis is catalyzed by the indoleamine 2,3-dioxygenase nanC which produces N-formyl-kynurenine through the catabolism of tryptophan. The two-module NRPS nanA then utilizes anthranilate (Ant) and L-kynurenine (L-Kyn) to assemble the dipeptide product nanangelenin B. The first adenylation domain of nanA (A1) loads anthranilate onto the T1 domain, while A2 loads kynurenine, generated through spontaneous nonenzymatic deformylation of the nanC-supplied N-formyl-kynurenine. The peptide bond formation between the tethered amino acids is catalyzed by the first condensation domain (C1) between anthranilate's carbonyl carbon and kynurenine's aliphatic primary amine. The second C domain (C2) catalyzes the final cyclization event between the aromatic amine of kynurenine and the tethered carbonyl carbon, yielding nanangelenin B. The terminal T3 domain enhances the catalytic efficiency of C2, suggesting the T2-tethered Ant-L-Kyn is transferred to T3 prior to cyclization by C2. Once released from nanA, nanangelenin B is then prenylated by the prenyltransferase nanD to form nanangelenin C. Nanangelenin C is then N-hydroxylated by the FAD-dependent monooxygenase nanF and further acetylated by the acetyltransferase nanB to yield nanangelenin F. Finally, the N-methyltransferase nanE methylates the amide nitrogen of 1-benzazepine to convert nanangelenin F into nanangelenin A. NanE is also able to methylate most of the intermediates of the pathway such as nanangelenin B and nanangelenin C to produce nanangelenin D and nanangelenin E, respectively. In Aspergillus nanangensis, this protein is Prenyltransferase nanD.